Consider the following 1094-residue polypeptide: Probable arabinosyltransferase C (1094 aa).

A run of 13 helical transmembrane segments spans residues 28–50, 232–251, 264–286, 341–360, 373–392, 431–453, 466–488, 530–552, 565–582, 586–608, 620–642, 657–679, and 700–722; these read IARY…TPLL, AAMI…LHIL, PARW…WWHF, SIWM…WVIS, TSRA…WLPL, IGAL…LVAI, RFGV…IPIF, SIAR…AMSL, SRRI…MMFT, WTHH…AVAV, TVFA…GWWY, WRWS…AAWF, and LAGI…EVVS. Positions 817-831 are enriched in low complexity; sequence GSEPGTEGGTTAAPG. A disordered region spans residues 817-836; the sequence is GSEPGTEGGTTAAPGINGSR.

This sequence belongs to the emb family.

It is found in the cell membrane. Its function is as follows. Arabinosyl transferase responsible for the polymerization of arabinose into the arabinan of arabinogalactan. The sequence is that of Probable arabinosyltransferase C (embC) from Mycobacterium tuberculosis (strain CDC 1551 / Oshkosh).